We begin with the raw amino-acid sequence, 404 residues long: Cysteine desulfurase IscS (404 aa).

Pyridoxal 5'-phosphate is bound by residues 75 to 76 (AT), Asn155, Gln183, and 203 to 205 (SAH). An N6-(pyridoxal phosphate)lysine modification is found at Lys206. Position 243 (Thr243) interacts with pyridoxal 5'-phosphate. Catalysis depends on Cys328, which acts as the Cysteine persulfide intermediate. A [2Fe-2S] cluster-binding site is contributed by Cys328.

The protein belongs to the class-V pyridoxal-phosphate-dependent aminotransferase family. NifS/IscS subfamily. Homodimer. Forms a heterotetramer with IscU, probably interacts with other sulfur acceptors. Pyridoxal 5'-phosphate is required as a cofactor.

It is found in the cytoplasm. The enzyme catalyses (sulfur carrier)-H + L-cysteine = (sulfur carrier)-SH + L-alanine. It participates in cofactor biosynthesis; iron-sulfur cluster biosynthesis. Inhibited by equimolar N-iodoacetyl-N'-(5-sulfo-1-naphthyl)ethylenediamine. Its function is as follows. Master enzyme that delivers sulfur to a number of partners involved in Fe-S cluster assembly, tRNA modification or cofactor biosynthesis. Catalyzes the removal of elemental sulfur from cysteine to produce alanine via an enzyme-bound persulfide intermediate. Functions as a sulfur delivery protein for Fe-S cluster synthesis. Cluster assembly on IscU homodimers proceeds sequentially from 1 2Fe-2S per dimer, to 2 2Fe-2S per dimer and finally 1 4Fe-4S per dimer. This chain is Cysteine desulfurase IscS, found in Azotobacter vinelandii.